We begin with the raw amino-acid sequence, 88 residues long: Translation initiation factor IF-1 2 (88 aa).

The S1-like domain maps to 1–72; the sequence is MAKEELIELQ…TKGRINFRHK (72 aa).

Belongs to the IF-1 family. As to quaternary structure, component of the 30S ribosomal translation pre-initiation complex which assembles on the 30S ribosome in the order IF-2 and IF-3, IF-1 and N-formylmethionyl-tRNA(fMet); mRNA recruitment can occur at any time during PIC assembly.

Its subcellular location is the cytoplasm. One of the essential components for the initiation of protein synthesis. Stabilizes the binding of IF-2 and IF-3 on the 30S subunit to which N-formylmethionyl-tRNA(fMet) subsequently binds. Helps modulate mRNA selection, yielding the 30S pre-initiation complex (PIC). Upon addition of the 50S ribosomal subunit IF-1, IF-2 and IF-3 are released leaving the mature 70S translation initiation complex. The polypeptide is Translation initiation factor IF-1 2 (Bordetella avium (strain 197N)).